We begin with the raw amino-acid sequence, 526 residues long: 1,4-beta-D-glucan cellobiohydrolase B (526 aa).

A signal peptide spans 1 to 23 (MASSFQLYKALLFFSSLLSAVQA). The catalytic stretch occupies residues 24–458 (QKVGTQQAEV…SNIKFGPIGS (435 aa)). Residue E235 is the Nucleophile of the active site. Catalysis depends on E240, which acts as the Proton donor. N-linked (GlcNAc...) asparagine glycans are attached at residues N293 and N400. Residues 459–490 (TFGNGGGSGPTTTVTTSTATSTTSSATSTATG) are ser/Thr-rich linker. The segment at 464-488 (GGSGPTTTVTTSTATSTTSSATSTA) is disordered. Low complexity predominate over residues 468-488 (PTTTVTTSTATSTTSSATSTA). Positions 490–526 (GQAQHWEQCGGNGWTGPTVCASPWACTVVNSWYSQCL) constitute a CBM1 domain. 2 cysteine pairs are disulfide-bonded: C498/C515 and C509/C525.

The protein belongs to the glycosyl hydrolase 7 (cellulase C) family.

It localises to the secreted. It carries out the reaction Hydrolysis of (1-&gt;4)-beta-D-glucosidic linkages in cellulose and cellotetraose, releasing cellobiose from the non-reducing ends of the chains.. Functionally, the biological conversion of cellulose to glucose generally requires three types of hydrolytic enzymes: (1) Endoglucanases which cut internal beta-1,4-glucosidic bonds; (2) Exocellobiohydrolases that cut the disaccharide cellobiose from the non-reducing end of the cellulose polymer chain; (3) Beta-1,4-glucosidases which hydrolyze the cellobiose and other short cello-oligosaccharides to glucose. The polypeptide is 1,4-beta-D-glucan cellobiohydrolase B (cbhB) (Emericella nidulans (strain FGSC A4 / ATCC 38163 / CBS 112.46 / NRRL 194 / M139) (Aspergillus nidulans)).